Consider the following 137-residue polypeptide: Large ribosomal subunit protein uL16 (137 aa).

The protein belongs to the universal ribosomal protein uL16 family. As to quaternary structure, part of the 50S ribosomal subunit.

In terms of biological role, binds 23S rRNA and is also seen to make contacts with the A and possibly P site tRNAs. This Afipia carboxidovorans (strain ATCC 49405 / DSM 1227 / KCTC 32145 / OM5) (Oligotropha carboxidovorans) protein is Large ribosomal subunit protein uL16.